A 195-amino-acid polypeptide reads, in one-letter code: dCTP deaminase (195 aa).

DCTP contacts are provided by residues 110–115 (RSSLAR), aspartate 128, 136–138 (VLE), tyrosine 171, lysine 178, and glutamine 182. The active-site Proton donor/acceptor is glutamate 138. The span at 169–179 (RPYSSRKDAKY) shows a compositional bias: basic and acidic residues. The tract at residues 169 to 195 (RPYSSRKDAKYKNQQSAVASRIDEDKE) is disordered.

This sequence belongs to the dCTP deaminase family. As to quaternary structure, homotrimer.

The catalysed reaction is dCTP + H2O + H(+) = dUTP + NH4(+). It participates in pyrimidine metabolism; dUMP biosynthesis; dUMP from dCTP (dUTP route): step 1/2. Catalyzes the deamination of dCTP to dUTP. This is dCTP deaminase from Haemophilus influenzae (strain 86-028NP).